We begin with the raw amino-acid sequence, 258 residues long: Putative gamma-secretase subunit APH-1C (258 aa).

Transmembrane regions (helical) follow at residues 5–25 (VFFG…LFTI), 32–52 (VIFL…SSMF), 71–91 (LLIF…LAYY), 116–136 (LLAY…SFVN), 161–181 (AFMT…FFDG), 187–207 (WYTL…TFLS), and 214–234 (LVTA…VAGG).

This sequence belongs to the APH-1 family. Potential component of the gamma-secretase complex.

The protein localises to the membrane. Potential subunit of the gamma-secretase complex, an endoprotease complex that catalyzes the intramembrane cleavage of integral proteins such as Notch receptors and APP (amyloid-beta precursor protein). The sequence is that of Putative gamma-secretase subunit APH-1C (Aph1c) from Mus musculus (Mouse).